Reading from the N-terminus, the 397-residue chain is MTIRNQRFSLLKQPIYSTLNQHLIDYPLPSILSYWWGFGSLAGICLVIQIVTGVFLAMNYTPHVDLAFNSVEHIMRDVEGGWLLRYMHANGASMFFIVVYLHIFRGLYYASYSSPREFVWCLGVVIFLLMIVTAFIGYVLPWGQMSFWGATVITSLASAIPVVGDTIVTWLWGGFSVDNATLNRFFSLHYLLPFILVGASLLHLAALHQYGSNNPLGVHSEMDKIAFYPYFYVKDLVGWVAFAIFFSIWIFFAPNVLGHPDNYIPANPMSTPPHIVPEWYFLPIYAILRSIPDKAGGVAAIALVFISLLALPFFKEMYVRSSSFRPIYQGIFWLLLADCLLLGWIGCQPVEAPFVTIGQISSFFFFLFFAITPILGRVGRGIPKYYTDETHRTGSFS.

A run of 4 helical transmembrane segments spans residues 38-58, 82-104, 119-139, and 185-205; these read FGSL…FLAM, WLLR…LHIF, VWCL…IGYV, and FFSL…LHLA. Residues His88 and His102 each contribute to the heme b site. Heme b-binding residues include His189 and His203. His208 serves as a coordination point for a ubiquinone. Helical transmembrane passes span 231–251, 295–315, 327–347, and 354–373; these read FYVK…IWIF, AGGV…PFFK, IYQG…WIGC, and FVTI…AITP.

It belongs to the cytochrome b family. The main subunits of complex b-c1 are: cytochrome b, cytochrome c1 and the Rieske protein. Heme b is required as a cofactor.

The protein localises to the mitochondrion inner membrane. Its function is as follows. Component of the ubiquinol-cytochrome c reductase complex (complex III or cytochrome b-c1 complex) that is part of the mitochondrial respiratory chain. The b-c1 complex mediates electron transfer from ubiquinol to cytochrome c. Contributes to the generation of a proton gradient across the mitochondrial membrane that is then used for ATP synthesis. This Oryza sativa subsp. indica (Rice) protein is Cytochrome b (MT-CYB).